The following is a 379-amino-acid chain: Copper-containing nitrite reductase (379 aa).

Positions 1-32 (MSEQFRLTRRSMLAGAAVAGALAPVVTSVAHA) form a signal peptide, tat-type signal. 2 consecutive Plastocyanin-like domains span residues 33-214 (EGGG…YDKV) and 215-379 (YYVG…PTSG). Cu cation is bound by residues histidine 134, histidine 139, histidine 174, cysteine 175, histidine 184, methionine 189, and histidine 345.

It belongs to the multicopper oxidase family. In terms of assembly, homotrimer. Cu(2+) is required as a cofactor. Requires Cu(+) as cofactor. FAD serves as cofactor. Post-translationally, predicted to be exported by the Tat system. The position of the signal peptide cleavage has not been experimentally proven.

It is found in the periplasm. The catalysed reaction is nitric oxide + Fe(III)-[cytochrome c] + H2O = Fe(II)-[cytochrome c] + nitrite + 2 H(+). Its pathway is nitrogen metabolism; nitrate reduction (denitrification); dinitrogen from nitrate: step 2/4. The protein is Copper-containing nitrite reductase (nirU) of Neorhizobium galegae (Rhizobium galegae).